The sequence spans 77 residues: MAKFANYLMLFLLVASLVMLEAQSSDTIKVPDLGKRLLMNRDPNGIPCAESCVWIPCTITALMGCSCKNNVCYNNEL.

The first 24 residues, methionine 1–serine 24, serve as a signal peptide directing secretion. A propeptide spans serine 25–asparagine 44 (removed in mature form). Residues glycine 45–asparagine 75 constitute a cross-link (cyclopeptide (Gly-Asn)). 3 disulfides stabilise this stretch: cysteine 48/cysteine 65, cysteine 52/cysteine 67, and cysteine 57/cysteine 72. Methionine 63 bears the Methionine sulfoxide; in form chassatide chaC2A mark. A propeptide spans glutamate 76–leucine 77 (removed in mature form).

Belongs to the cyclotide family. Bracelet subfamily. Post-translationally, this is a cyclic peptide. In terms of tissue distribution, expressed in fruit, pedicel and stem but not in leaf and root (at protein level).

Its function is as follows. Chassatide C2: Probably participates in a plant defense mechanism. Has no activity against bacteria up to a concentration of 80 uM. Has cytotoxic but no hemolytic activity. In terms of biological role, chassatide C2A: Probably participates in a plant defense mechanism. Has no activity against bacteria up to a concentration of 80 uM. Has no cytotoxic and no hemolytic activity. In Chassalia chartacea (Chassalia curviflora), this protein is Chassatide C2.